The primary structure comprises 585 residues: uncharacterized protein (585 aa).

To E.coli YejM.

This is an uncharacterized protein from Haemophilus influenzae (strain ATCC 51907 / DSM 11121 / KW20 / Rd).